A 318-amino-acid polypeptide reads, in one-letter code: Deoxyribose-phosphate aldolase (318 aa).

Asp155 acts as the Proton donor/acceptor in catalysis. Lys218 functions as the Schiff-base intermediate with acetaldehyde in the catalytic mechanism. The active-site Proton donor/acceptor is Lys254.

The protein belongs to the DeoC/FbaB aldolase family. DeoC type 2 subfamily. As to quaternary structure, interacts with YBX1.

The protein localises to the cytoplasm. It localises to the cytoplasmic granule. It is found in the nucleus. It carries out the reaction 2-deoxy-D-ribose 5-phosphate = D-glyceraldehyde 3-phosphate + acetaldehyde. The protein operates within carbohydrate degradation; 2-deoxy-D-ribose 1-phosphate degradation; D-glyceraldehyde 3-phosphate and acetaldehyde from 2-deoxy-alpha-D-ribose 1-phosphate: step 2/2. Its function is as follows. Catalyzes a reversible aldol reaction between acetaldehyde and D-glyceraldehyde 3-phosphate to generate 2-deoxy-D-ribose 5-phosphate. Participates in stress granule (SG) assembly. May allow ATP production from extracellular deoxyinosine in conditions of energy deprivation. The chain is Deoxyribose-phosphate aldolase (Dera) from Mus musculus (Mouse).